Here is a 598-residue protein sequence, read N- to C-terminus: Elongation factor 4 (598 aa).

The tr-type G domain maps to 4-186; sequence DHIRNFSIIA…AIVKRVPPPK (183 aa). GTP is bound by residues 16-21 and 133-136; these read DHGKST and NKID.

Belongs to the TRAFAC class translation factor GTPase superfamily. Classic translation factor GTPase family. LepA subfamily.

The protein localises to the cell inner membrane. It carries out the reaction GTP + H2O = GDP + phosphate + H(+). In terms of biological role, required for accurate and efficient protein synthesis under certain stress conditions. May act as a fidelity factor of the translation reaction, by catalyzing a one-codon backward translocation of tRNAs on improperly translocated ribosomes. Back-translocation proceeds from a post-translocation (POST) complex to a pre-translocation (PRE) complex, thus giving elongation factor G a second chance to translocate the tRNAs correctly. Binds to ribosomes in a GTP-dependent manner. This is Elongation factor 4 from Magnetococcus marinus (strain ATCC BAA-1437 / JCM 17883 / MC-1).